The primary structure comprises 266 residues: Methionine aminopeptidase (266 aa).

His-80 lines the substrate pocket. Residues Asp-98, Asp-109, and His-172 each contribute to the a divalent metal cation site. Residue His-179 coordinates substrate. A divalent metal cation contacts are provided by Glu-206 and Glu-237.

The protein belongs to the peptidase M24A family. Methionine aminopeptidase type 1 subfamily. In terms of assembly, monomer. Co(2+) serves as cofactor. The cofactor is Zn(2+). Requires Mn(2+) as cofactor. Fe(2+) is required as a cofactor.

It catalyses the reaction Release of N-terminal amino acids, preferentially methionine, from peptides and arylamides.. In terms of biological role, removes the N-terminal methionine from nascent proteins. The N-terminal methionine is often cleaved when the second residue in the primary sequence is small and uncharged (Met-Ala-, Cys, Gly, Pro, Ser, Thr, or Val). Requires deformylation of the N(alpha)-formylated initiator methionine before it can be hydrolyzed. The protein is Methionine aminopeptidase of Buchnera aphidicola subsp. Baizongia pistaciae (strain Bp).